We begin with the raw amino-acid sequence, 284 residues long: Tropomyosin beta chain (284 aa).

At methionine 1 the chain carries N-acetylmethionine. The segment at 1-65 (MDAIKKKMQM…EVEKYSESVK (65 aa)) is disordered. Residues 1–284 (MDAIKKKMQM…DNALNDITSL (284 aa)) adopt a coiled-coil conformation. 2 stretches are compositionally biased toward basic and acidic residues: residues 12-40 (KLDK…KQLE) and 51-65 (KGTE…ESVK). A Phosphothreonine modification is found at threonine 53. A Phosphoserine; by PIK3CG modification is found at serine 61. Threonine 79 is subject to Phosphothreonine. Serine 87 bears the Phosphoserine mark. The residue at position 108 (threonine 108) is a Phosphothreonine. The disordered stretch occupies residues 117-136 (EKAADESERGMKVIENRAMK). Residues serine 158, serine 206, and serine 215 each carry the phosphoserine modification. Position 252 is a phosphothreonine (threonine 252). Tyrosine 261 carries the phosphotyrosine modification. Serine 271 bears the Phosphoserine mark. The residue at position 282 (threonine 282) is a Phosphothreonine. A Phosphoserine modification is found at serine 283.

The protein belongs to the tropomyosin family. As to quaternary structure, homodimer. Heterodimer of an alpha (TPM1, TPM3 or TPM4) and a beta (TPM2) chain. In terms of processing, phosphorylated on Ser-61 by PIK3CG. Phosphorylation on Ser-61 is required for ADRB2 internalization. As to expression, present in primary breast cancer tissue, absent from normal breast tissue.

It localises to the cytoplasm. Its subcellular location is the cytoskeleton. Its function is as follows. Binds to actin filaments in muscle and non-muscle cells. Plays a central role, in association with the troponin complex, in the calcium dependent regulation of vertebrate striated muscle contraction. Smooth muscle contraction is regulated by interaction with caldesmon. In non-muscle cells is implicated in stabilizing cytoskeleton actin filaments. The non-muscle isoform may have a role in agonist-mediated receptor internalization. The sequence is that of Tropomyosin beta chain (TPM2) from Homo sapiens (Human).